The sequence spans 38 residues: Plastocyanin (38 aa).

In terms of domain architecture, Plastocyanin-like spans 1-38 (AQTVEVKMGADGGLLVFEPAKAGPHNVVFDEDNIPPGV). H25 is a Cu cation binding site.

This sequence belongs to the plastocyanin family. Requires Cu(2+) as cofactor.

The protein localises to the plastid. It localises to the chloroplast thylakoid membrane. Functionally, participates in electron transfer between P700 and the cytochrome b6-f complex in photosystem I. In Thalassiosira oceanica (Marine diatom), this protein is Plastocyanin (PETE).